We begin with the raw amino-acid sequence, 141 residues long: Cystatin (141 aa).

Residues 1 to 26 form the signal peptide; that stretch reads MVHSQLPVAAPLRLLCALLLLPSATM. The Cystatin domain occupies 29-129; sequence GGLYPRSVTD…CHFQVWSRPW (101 aa). A Secondary area of contact motif is present at residues 73–77; it reads QVVTG. Intrachain disulfides connect cysteine 91-cysteine 107 and cysteine 120-cysteine 140.

The protein belongs to the cystatin family. As to expression, expressed by the venom gland at an extremely low level (at protein level).

It localises to the secreted. Its function is as follows. Inhibits various C1 cysteine proteases including cathepsin L, papain and cathepsin B. This protein has no toxic activity and its function in the venom is unknown. It may play a role as a housekeeping or regulatory protein. This is Cystatin from Tropidechis carinatus (Australian rough-scaled snake).